The chain runs to 57 residues: Protein translocase subunit SecE (57 aa).

A helical transmembrane segment spans residues 34–54 (AGILLIGAIGFLVFLIMGGIV).

Belongs to the SecE/SEC61-gamma family. Component of the Sec protein translocase complex. Heterotrimer consisting of SecY (alpha), SecG (beta) and SecE (gamma) subunits. The heterotrimers can form oligomers, although 1 heterotrimer is thought to be able to translocate proteins. Interacts with the ribosome. May interact with SecDF, and other proteins may be involved.

It is found in the cell membrane. Its function is as follows. Essential subunit of the Sec protein translocation channel SecYEG. Clamps together the 2 halves of SecY. May contact the channel plug during translocation. The chain is Protein translocase subunit SecE from Halobacterium salinarum (strain ATCC 29341 / DSM 671 / R1).